We begin with the raw amino-acid sequence, 273 residues long: 3-methyl-2-oxobutanoate hydroxymethyltransferase (273 aa).

Asp49 and Asp88 together coordinate Mg(2+). Residues 49-50 (DS), Asp88, and Lys118 contribute to the 3-methyl-2-oxobutanoate site. Glu120 provides a ligand contact to Mg(2+). Residue Glu187 is the Proton acceptor of the active site.

It belongs to the PanB family. In terms of assembly, homodecamer; pentamer of dimers. Requires Mg(2+) as cofactor.

Its subcellular location is the cytoplasm. The catalysed reaction is 3-methyl-2-oxobutanoate + (6R)-5,10-methylene-5,6,7,8-tetrahydrofolate + H2O = 2-dehydropantoate + (6S)-5,6,7,8-tetrahydrofolate. It functions in the pathway cofactor biosynthesis; (R)-pantothenate biosynthesis; (R)-pantoate from 3-methyl-2-oxobutanoate: step 1/2. Its function is as follows. Catalyzes the reversible reaction in which hydroxymethyl group from 5,10-methylenetetrahydrofolate is transferred onto alpha-ketoisovalerate to form ketopantoate. This is 3-methyl-2-oxobutanoate hydroxymethyltransferase from Rhizobium rhizogenes (strain K84 / ATCC BAA-868) (Agrobacterium radiobacter).